A 285-amino-acid polypeptide reads, in one-letter code: Iron uptake system component EfeM (285 aa).

An N-terminal signal peptide occupies residues 1 to 34; it reads MTYPLLTRKTLMKKTPLALLLTLGLLQTPLAAFA.

The protein belongs to the EfeM/EfeO family. As to quaternary structure, component of the iron transporter efeUOB/M complex composed of EfeU, EfeM and EfeB.

Its subcellular location is the periplasm. Its function is as follows. Part of the iron transporter system efeUOB/M involved in iron import. Specifically binds Fe(3+), which is produced by EfeB-mediated oxidation of Fe(2+), and delivers it to the cell inner membrane permease EfeU. Also binds Zn(2+) and Cu(2+) in vitro. This chain is Iron uptake system component EfeM, found in Pseudomonas syringae pv. syringae (strain B728a).